Here is an 880-residue protein sequence, read N- to C-terminus: Kinesin heavy chain (880 aa).

A Kinesin motor domain is found at 4–327; sequence SIKVVCRFRP…LRFGMRAKAI (324 aa). Residues 85-92 and 235-242 contribute to the ATP site; these read GQTGAGKS and GSEKVGKT. The disordered stretch occupies residues 388-426; the sequence is VSGAKAAAAQTPRPSTPSRLATESRAETPVAERSATPGI. The segment covering 399–408 has biased composition (polar residues); sequence PRPSTPSRLA. Residues 428 to 849 adopt a coiled-coil conformation; it reads IDKDEREEFL…QEKLTTASHR (422 aa).

Belongs to the TRAFAC class myosin-kinesin ATPase superfamily. Kinesin family. Kinesin subfamily.

The protein localises to the cytoplasm. Its subcellular location is the cytoskeleton. Its function is as follows. Kinesin is a microtubule-associated force-producing protein that may play a role in organelle transport. Its motor activity is directed toward the microtubule's plus end. The protein is Kinesin heavy chain (klp1) of Botryotinia fuckeliana (Noble rot fungus).